Reading from the N-terminus, the 727-residue chain is YTH domain-containing protein 1 (727 aa).

Over residues 1 to 12 (MAADSREEKDGE) the composition is skewed to basic and acidic residues. A disordered region spans residues 1 to 338 (MAADSREEKD…KHEKLSSSVR (338 aa)). Phosphoserine is present on Ser35. The span at 50 to 59 (DRMESTDTKR) shows a compositional bias: basic and acidic residues. Residues 63–90 (SVHSRQLVSKPLSSSVSNNKRIVSTKGK) are compositionally biased toward polar residues. Over residues 91-115 (SATEYKNEEYQRSERNKRLDADRKI) the composition is skewed to basic and acidic residues. Lys96 participates in a covalent cross-link: Glycyl lysine isopeptide (Lys-Gly) (interchain with G-Cter in SUMO2). Ser118 and Ser120 each carry phosphoserine. A compositionally biased stretch (basic and acidic residues) spans 124 to 144 (EPYKNQPEKTCVRKRDPERRA). Phosphoserine is present on Ser146. Phosphothreonine is present on Thr148. Basic and acidic residues-rich tracts occupy residues 151-163 (GSER…DRRA) and 170-185 (SKEE…DHET). Acidic residues predominate over residues 199-254 (ENEEEGVEEDVEEDEEVEEDAEEDEEVDEDGEEEEEEEEEEEEEEEEEEEEYEQDE). Residues 255–270 (RDQKEEGNDYDTRSEA) are compositionally biased toward basic and acidic residues. Over residues 280 to 289 (FTDGSVRSGS) the composition is skewed to polar residues. Phosphoserine is present on residues Ser308, Ser315, Ser317, Ser318, and Ser320. Over residues 315–325 (SGSSASESYAG) the composition is skewed to low complexity. The YTH domain maps to 355-492 (ARFFLIKSNN…ECGTQLCLLF (138 aa)). RNA is bound by residues 361–363 (KSN) and 377–378 (WS). Ser424 bears the Phosphoserine mark. RNA is bound at residue Trp428. Ser435 carries the phosphoserine modification. Asp476 contacts RNA. Over residues 508-523 (RHKRRMHSQPRSRGRP) the composition is skewed to basic residues. 3 disordered regions span residues 508–564 (RHKR…PGYL), 607–643 (GMPP…HPVP), and 669–727 (AVVS…RYRR). Over residues 524–564 (SRREPVRDVGRRRPEDYDIHNSRKKPRIDYPPEFHQRPGYL) the composition is skewed to basic and acidic residues. Ser545 is subject to Phosphoserine. Basic and acidic residues predominate over residues 679-727 (RERDRERERDRPRDNRRDRERDRGRDRERERERLCDRDRDRGERGRYRR).

As to quaternary structure, interacts with SRSF1. Interacts with SRSF2. Interacts with SRSF3. Interacts with SRSF7. Interacts with SRSF10. Interacts with CPSF6. Interacts with KHDRBS1/SAM68. Interacts with TRA2B. Interacts with KHDRBS3. Interacts with EMD. Interacts with RBMX. Interacts with ZCCHC8. Post-translationally, tyrosine phosphorylated.

It localises to the nucleus. It is found in the nucleus speckle. Regulator of alternative splicing that specifically recognizes and binds N6-methyladenosine (m6A)-containing RNAs. M6A is a modification present at internal sites of mRNAs and some non-coding RNAs and plays a role in the efficiency of mRNA splicing, processing and stability. Acts as a key regulator of exon-inclusion or exon-skipping during alternative splicing via interaction with mRNA splicing factors SRSF3 and SRSF10. Specifically binds m6A-containing mRNAs and promotes recruitment of SRSF3 to its mRNA-binding elements adjacent to m6A sites, leading to exon-inclusion during alternative splicing. In contrast, interaction with SRSF3 prevents interaction with SRSF10, a splicing factor that promotes exon skipping: this prevents SRSF10 from binding to its mRNA-binding sites close to m6A-containing regions, leading to inhibit exon skipping during alternative splicing. May also regulate alternative splice site selection. Also involved in nuclear export of m6A-containing mRNAs via interaction with SRSF3: interaction with SRSF3 facilitates m6A-containing mRNA-binding to both SRSF3 and NXF1, promoting mRNA nuclear export. Involved in S-adenosyl-L-methionine homeostasis by regulating expression of MAT2A transcripts, probably by binding m6A-containing MAT2A mRNAs. Also recognizes and binds m6A on other RNA molecules. Involved in random X inactivation mediated by Xist RNA: recognizes and binds m6A-containing Xist and promotes transcription repression activity of Xist. Also recognizes and binds m6A-containing single-stranded DNA. Involved in germline development: required for spermatogonial development in males and oocyte growth and maturation in females, probably via its role in alternative splicing. This chain is YTH domain-containing protein 1, found in Homo sapiens (Human).